A 265-amino-acid polypeptide reads, in one-letter code: Glutamate racemase (265 aa).

Residues 12-13 (DS) and 44-45 (YG) contribute to the substrate site. Cys-75 (proton donor/acceptor) is an active-site residue. 76 to 77 (NT) serves as a coordination point for substrate. Residue Cys-186 is the Proton donor/acceptor of the active site. 187-188 (TH) is a binding site for substrate.

Belongs to the aspartate/glutamate racemases family.

The enzyme catalyses L-glutamate = D-glutamate. It participates in cell wall biogenesis; peptidoglycan biosynthesis. In terms of biological role, provides the (R)-glutamate required for cell wall biosynthesis. This Pseudomonas paraeruginosa (strain DSM 24068 / PA7) (Pseudomonas aeruginosa (strain PA7)) protein is Glutamate racemase.